The sequence spans 540 residues: Growth factor receptor-bound protein 14 (540 aa).

Position 2 is an N-acetylthreonine (Thr-2). Residue Gln-9 is modified to Phosphothreonine. Residues Lys-106–Ala-192 enclose the Ras-associating domain. Residues Tyr-234–Tyr-342 form the PH domain. Ser-372 and Ser-375 each carry phosphoserine. An SH2 domain is found at Trp-439–Cys-535.

This sequence belongs to the GRB7/10/14 family. Interacts with the cytoplasmic domain of the autophosphorylated insulin receptor (INSR), through the SH2 domain. Interacts with GRB14 (via BPS domain); this interaction protects the tyrosines in the activation loop on INSR from dephosphorylation. Binds to the ankyrin repeat region of TNKS2 via its N-terminus. Interacts with activated NRAS. Interacts (via SH2 domain) with TEK/TIE2 (tyrosine phosphorylated). Phosphorylated on serine residues. Phosphorylated on tyrosine residues by TEK/TIE2. Expressed at high levels in the liver, kidney, pancreas, testis, ovary, heart and skeletal muscle.

The protein resides in the cytoplasm. It localises to the endosome membrane. Functionally, adapter protein which modulates coupling of cell surface receptor kinases with specific signaling pathways. Binds to, and suppresses signals from, the activated insulin receptor (INSR). Potent inhibitor of insulin-stimulated MAPK3 phosphorylation. Plays a critical role regulating PDPK1 membrane translocation in response to insulin stimulation and serves as an adapter protein to recruit PDPK1 to activated insulin receptor, thus promoting PKB/AKT1 phosphorylation and transduction of the insulin signal. In Homo sapiens (Human), this protein is Growth factor receptor-bound protein 14 (GRB14).